The sequence spans 76 residues: Large ribosomal subunit protein eL29 (76 aa).

Residues 1 to 29 (MAKSKNHTNHNQNKKAHRNGIKRPLRKRH) show a composition bias toward basic residues. 2 disordered regions span residues 1–33 (MAKSKNHTNHNQNKKAHRNGIKRPLRKRHESTL) and 47–76 (RKGNLSREESVKRYNERIASQKGKPKPVTL). Phosphoserine is present on Ser-31. The span at 51-62 (LSREESVKRYNE) shows a compositional bias: basic and acidic residues.

Belongs to the eukaryotic ribosomal protein eL29 family.

This Drosophila melanogaster (Fruit fly) protein is Large ribosomal subunit protein eL29 (RpL29).